Consider the following 289-residue polypeptide: Nucleotide-binding protein LAF_0356 (289 aa).

Position 12–19 (12–19 (GMSGAGKT)) interacts with ATP. 62-65 (DSRS) contacts GTP.

The protein belongs to the RapZ-like family.

Displays ATPase and GTPase activities. This Limosilactobacillus fermentum (strain NBRC 3956 / LMG 18251) (Lactobacillus fermentum) protein is Nucleotide-binding protein LAF_0356.